The following is a 137-amino-acid chain: Type 3 secretion system pilotin (137 aa).

The signal sequence occupies residues methionine 1 to serine 14.

This sequence belongs to the ExsB/YscW family.

The protein resides in the cell outer membrane. Its function is as follows. Involved in the synthesis of the type III secretion system (T3SS), also called injectisome, which is used to inject bacterial effector proteins into eukaryotic host cells. Pilot protein that is required for the proper localization of the secretin PscC in the outer membrane. Necessary for full in vivo virulence. The sequence is that of Type 3 secretion system pilotin from Pseudomonas aeruginosa (strain ATCC 15692 / DSM 22644 / CIP 104116 / JCM 14847 / LMG 12228 / 1C / PRS 101 / PAO1).